Consider the following 501-residue polypeptide: Cytochrome P450 90A4 (501 aa).

The chain crosses the membrane as a helical span at residues 2 to 22; the sequence is AAAALLLLAAAAAAVVVAMAL. A heme-binding site is contributed by Cys446.

This sequence belongs to the cytochrome P450 family. The cofactor is heme. Highly expressed in shoot apex and inflorenscence. Expressed in roots, stems, leaf blades and leaf sheaths.

Its subcellular location is the cell membrane. It participates in plant hormone biosynthesis; brassinosteroid biosynthesis. Functionally, catalyzes the C23-alpha-hydroxylation step in brassinosteroid biosynthesis. Converts 6-deoxocathasterone to 6-deoxoteasterone in the late C6-oxidation pathway and cathasterone to teasterone (TE) in the early C6-oxidation pathway of brassinolide (BL) biosynthesis. The chain is Cytochrome P450 90A4 from Oryza sativa subsp. japonica (Rice).